We begin with the raw amino-acid sequence, 176 residues long: Large ribosomal subunit protein bL17m (176 aa).

The transit peptide at Met-1–Ala-8 directs the protein to the mitochondrion.

Belongs to the bacterial ribosomal protein bL17 family. Component of the mitochondrial ribosome large subunit (39S) which comprises a 16S rRNA and about 50 distinct proteins.

It is found in the mitochondrion. The polypeptide is Large ribosomal subunit protein bL17m (Mrpl17) (Mus musculus (Mouse)).